The chain runs to 348 residues: MKIIGIESSCDETGVAVYDTALSGFAALRAHSVYSQVALHAEYGGVVPELASRDHVRKLLPLLRQTLAEAKLSVEELDGVAYTAGPGLVGALLVGAGVARALAWALEVPAIGVHHMEGHLLSPLLEDDPPEVPFVALLVSGGHTQLVAVDAIGDYRLLGETLDDAAGEAFDKVAKLMGLPYPGGPQLAALAEQGIPGRFCFTRPMVDRPGLDFSFSGLKTQVLLAWRNSDQSDAIRVDVARGFEDAVVDTLAIKCERALDTVACQTLVVAGGVGANKCLRARLQAMCRQRGGRACFPRPALCTDNGAMIAFAGALRLQAGQQSDIAVRVTPRWDMAALPPLVSRSCRR.

Positions 115 and 119 each coordinate Fe cation. Substrate-binding positions include leucine 138–glycine 142, aspartate 171, glycine 184, and asparagine 276. Aspartate 304 contributes to the Fe cation binding site.

This sequence belongs to the KAE1 / TsaD family. Requires Fe(2+) as cofactor.

The protein localises to the cytoplasm. The enzyme catalyses L-threonylcarbamoyladenylate + adenosine(37) in tRNA = N(6)-L-threonylcarbamoyladenosine(37) in tRNA + AMP + H(+). Functionally, required for the formation of a threonylcarbamoyl group on adenosine at position 37 (t(6)A37) in tRNAs that read codons beginning with adenine. Is involved in the transfer of the threonylcarbamoyl moiety of threonylcarbamoyl-AMP (TC-AMP) to the N6 group of A37, together with TsaE and TsaB. TsaD likely plays a direct catalytic role in this reaction. This chain is tRNA N6-adenosine threonylcarbamoyltransferase, found in Xylella fastidiosa (strain 9a5c).